A 1138-amino-acid chain; its full sequence is MAGELVSFAVNKLWDLLSHEYTLFQGVEDQVAELKSDLNLLKSFLKDADAKKHTSALVRYCVEEIKDIVYDAEDVLETFVQKEKLGTTSGIRKHIKRLTCIVPDRREIALYIGHVSKRITRVIRDMQSFGVQQMIVDDYMHPLRNREREIRRTFPKDNESGFVALEENVKKLVGYFVEEDNYQVVSITGMGGLGKTTLARQVFNHDMVTKKFDKLAWVSVSQDFTLKNVWQNILGDLKPKEEETKEEEKKILEMTEYTLQRELYQLLEMSKSLIVLDDIWKKEDWEVIKPIFPPTKGWKLLLTSRNESIVAPTNTKYFNFKPECLKTDDSWKLFQRIAFPINDASEFEIDEEMEKLGEKMIEHCGGLPLAIKVLGGMLAEKYTSHDWRRLSENIGSHLVGGRTNFNDDNNNSCNYVLSLSFEELPSYLKHCFLYLAHFPEDYEIKVENLSYYWAAEEIFQPRHYDGEIIRDVGDVYIEELVRRNMVISERDVKTSRFETCHLHDMMREVCLLKAKEENFLQITSNPPSTANFQSTVTSRRLVYQYPTTLHVEKDINNPKLRSLVVVTLGSWNMAGSSFTRLELLRVLDLVQAKLKGGKLASCIGKLIHLRYLSLEYAEVTHIPYSLGNLKLLIYLNLHISLSSRSNFVPNVLMGMQELRYLALPSLIERKTKLELSNLVKLETLENFSTKNSSLEDLRGMVRLRTLTIELIEETSLETLAASIGGLKYLEKLEIDDLGSKMRTKEAGIVFDFVHLKRLRLELYMPRLSKEQHFPSHLTTLYLQHCRLEEDPMPILEKLLQLKELELGHKSFSGKKMVCSSCGFPQLQKLSISGLKEWEDWKVEESSMPLLLTLNIFDCRKLKQLPDEHLPSHLTAISLKKCGLEDPIPTLERLVHLKELSLSELCGRIMVCTGGGFPQLHKLDLSELDGLEEWIVEDGSMPRLHTLEIRRCLKLKKLPNGFPQLQNLHLTEVEEWEEGMIVKQGSMPLLHTLYIWHCPKLPGEQHFPSHLTTVFLLGMYVEEDPMRILEKLLHLKNVSLFQSFSGKRMVCSGGGFPQLQKLSIREIEWEEWIVEQGSMPLLHTLYIGVCPNLKELPDGLRFIYSLKNLIVSKRWKKRLSEGGEDYYKVQHIPSVEFDD.

One can recognise an NB-ARC domain in the interval 166-422 (EENVKKLVGY…CNYVLSLSFE (257 aa)). An ATP-binding site is contributed by 189 to 196 (GMGGLGKT). LRR repeat units follow at residues 544–565 (QYPTTLHVEKDINNPKLRSLVV), 566–581 (VTLGSWNMAGSSFTRL), 582–606 (ELLRVLDLVQAKLKGGKLASCIGKL), 607–631 (IHLRYLSLEYAEVTHIPYSLGNLKL), 655–680 (MQELRYLALPSLIERKTKLELSNLVK), 681–705 (LETLENFSTKNSSLEDLRGMVRLRT), 707–726 (TIELIEETSLETLAASIGGL), 727–752 (KYLEKLEIDDLGSKMRTKEAGIVFDF), 754–774 (HLKRLRLELYMPRLSKEQHFP), 775–797 (SHLTTLYLQHCRLEEDPMPILEK), 798–825 (LLQLKELELGHKSFSGKKMVCSSCGFPQ), 847–871 (MPLLLTLNIFDCRKLKQLPDEHLPS), 873–893 (LTAISLKKCGLEDPIPTLERL), 894–918 (VHLKELSLSELCGRIMVCTGGGFPQ), 940–963 (MPRLHTLEIRRCLKLKKLPNGFPQ), 1028–1050 (LEKLLHLKNVSLFQSFSGKRMVC), 1055–1078 (FPQLQKLSIREIEWEEWIVEQGSM), 1079–1103 (PLLHTLYIGVCPNLKELPDGLRFIY), and 1115–1138 (KKRLSEGGEDYYKVQHIPSVEFDD).

The protein belongs to the disease resistance NB-LRR family.

Disease resistance protein required for incompatible interactions with avirulent strains of Hyaloperonospora arabidopsidis (downy mildew), isolate Hpa-Hiks1 in cv. Columbia. The sequence is that of Protein RECOGNITION OF PERONOSPORA PARASITICA 7 from Arabidopsis thaliana (Mouse-ear cress).